The primary structure comprises 359 residues: Cinnamyl alcohol dehydrogenase 8 (359 aa).

Position 46 (cysteine 46) interacts with Zn(2+). Residue serine 48 coordinates NADP(+). The Zn(2+) site is built by histidine 68, glutamate 69, cysteine 99, cysteine 102, cysteine 105, cysteine 113, and cysteine 162. NADP(+)-binding positions include threonine 166, 187 to 192, 210 to 215, threonine 250, glycine 274, and 297 to 299; these read GLGGLG, STSEKK, and SMI.

The protein belongs to the zinc-containing alcohol dehydrogenase family. Homodimer. It depends on Zn(2+) as a cofactor. In terms of tissue distribution, expressed in the differentiation and elongation zones of primary and lateral roots. Expressed in the hypocotyl, cotyledon veins, vasculature of the first rosette leaves, hydathodes and trichomes. In stems, expressed in the vascular cambium and developing xylem tissues. Expressed in the style, anthers, stamen filaments, stigmatic regions in flowers, and abscission and style regions of siliques.

It catalyses the reaction (E)-cinnamyl alcohol + NADP(+) = (E)-cinnamaldehyde + NADPH + H(+). Its pathway is aromatic compound metabolism; phenylpropanoid biosynthesis. In terms of biological role, involved in lignin biosynthesis. Catalyzes the final step specific for the production of lignin monomers. Catalyzes the NADPH-dependent reduction of coniferaldehyde, 5-hydroxyconiferaldehyde, sinapaldehyde, 4-coumaraldehyde and caffeyl aldehyde to their respective alcohols. This Arabidopsis thaliana (Mouse-ear cress) protein is Cinnamyl alcohol dehydrogenase 8 (CAD8).